A 295-amino-acid chain; its full sequence is MSKIPSVNIKALLDAGVHFGHKTSRWNPKMASYIYGERDDVHIIDLRQSVALMSVALNAIYETVKKDGKILFVSTKIQASDIIAEYAEKCGQYYVNHRWLGGMLTNWKTIAGSIEKLNKLDKTLENEEALMGYTKKEILYMSRKKDKLLLSLAGIRNLNSKPDLLVVIDTNKEHIAINEAVKLNVPIVAVVDTNSNPDNVDYPIPGNDDSIRSIRLYCSLFADAALQGLEESMKASGVDMGAMQEHTDKGLTSKNVSKLKQAKKFSKTKNIDEETNTEFEKALNDADENKNSDNA.

The interval 263 to 295 (KKFSKTKNIDEETNTEFEKALNDADENKNSDNA) is disordered. A compositionally biased stretch (basic and acidic residues) spans 278–295 (EFEKALNDADENKNSDNA).

This sequence belongs to the universal ribosomal protein uS2 family.

This chain is Small ribosomal subunit protein uS2, found in Rickettsia peacockii (strain Rustic).